The chain runs to 360 residues: Phosphoserine aminotransferase (360 aa).

Residue Arg-42 participates in L-glutamate binding. Residues Trp-102, Thr-152, Asp-171, and Gln-194 each coordinate pyridoxal 5'-phosphate. Lys-195 carries the N6-(pyridoxal phosphate)lysine modification. A pyridoxal 5'-phosphate-binding site is contributed by 237-238 (NT).

The protein belongs to the class-V pyridoxal-phosphate-dependent aminotransferase family. SerC subfamily. In terms of assembly, homodimer. Pyridoxal 5'-phosphate is required as a cofactor.

Its subcellular location is the cytoplasm. The enzyme catalyses O-phospho-L-serine + 2-oxoglutarate = 3-phosphooxypyruvate + L-glutamate. It catalyses the reaction 4-(phosphooxy)-L-threonine + 2-oxoglutarate = (R)-3-hydroxy-2-oxo-4-phosphooxybutanoate + L-glutamate. It participates in amino-acid biosynthesis; L-serine biosynthesis; L-serine from 3-phospho-D-glycerate: step 2/3. It functions in the pathway cofactor biosynthesis; pyridoxine 5'-phosphate biosynthesis; pyridoxine 5'-phosphate from D-erythrose 4-phosphate: step 3/5. Functionally, catalyzes the reversible conversion of 3-phosphohydroxypyruvate to phosphoserine and of 3-hydroxy-2-oxo-4-phosphonooxybutanoate to phosphohydroxythreonine. In Coxiella burnetii (strain CbuK_Q154) (Coxiella burnetii (strain Q154)), this protein is Phosphoserine aminotransferase.